The sequence spans 297 residues: Carbamate kinase (297 aa).

Belongs to the carbamate kinase family.

It is found in the cytoplasm. The catalysed reaction is hydrogencarbonate + NH4(+) + ATP = carbamoyl phosphate + ADP + H2O + H(+). The enzyme catalyses carbamate + ATP = carbamoyl phosphate + ADP. It catalyses the reaction hydrogencarbonate + NH4(+) = carbamate + H2O + H(+). It functions in the pathway nitrogen metabolism; (S)-allantoin degradation. Its function is as follows. Kinase involved in the anaerobic nitrogen utilization via the assimilation of allantoin. Catalyzes the transfer of a phosphate group from carbamoyl phosphate to ADP to produce ATP and leave carbamate, which spontaneously hydrolyzes to ammonia and hydrogencarbonate. This chain is Carbamate kinase, found in Escherichia coli O6:H1 (strain CFT073 / ATCC 700928 / UPEC).